The primary structure comprises 202 residues: Thymidylate kinase (202 aa).

7–14 (GTEGVGKT) contributes to the ATP binding site.

It belongs to the thymidylate kinase family.

The enzyme catalyses dTMP + ATP = dTDP + ADP. Its function is as follows. Phosphorylation of dTMP to form dTDP in both de novo and salvage pathways of dTTP synthesis. The polypeptide is Thymidylate kinase (Acinetobacter baylyi (strain ATCC 33305 / BD413 / ADP1)).